The sequence spans 337 residues: Endochitinase 37 (337 aa).

Positions 1-25 (MTRLLDASFLLLPVIASTLFGTASA) are cleaved as a signal peptide. The 300-residue stretch at 38–337 (KVLQGYWENW…GSKNWTFGDN (300 aa)) folds into the GH18 domain. The Proton donor role is filled by Glu-160. Asn-331 carries N-linked (GlcNAc...) asparagine glycosylation.

The protein belongs to the glycosyl hydrolase 18 family. Chitinase class V subfamily. In terms of assembly, monomer.

The protein localises to the secreted. It catalyses the reaction Random endo-hydrolysis of N-acetyl-beta-D-glucosaminide (1-&gt;4)-beta-linkages in chitin and chitodextrins.. Its function is as follows. Secreted chitinase involved in the degradation of chitin, a component of the cell walls of fungi and exoskeletal elements of some animals (including worms and arthropods). Plays a morphogenetic role during apical growth, cell division and differentiation (cell wall morphogenesis). May be involved in the degradation and further assimilation of phytopathogenic fungi, namely mycoparasitism, the major mechanism accounting for the antagonistic activity against phytopathogenic fungi displayed by Trichoderma. The polypeptide is Endochitinase 37 (chit37) (Trichoderma harzianum (Hypocrea lixii)).